The following is a 164-amino-acid chain: Anthrone oxygenase AgnL2 (164 aa).

3 helical membrane-spanning segments follow: residues 11 to 31 (VVTG…AVPV), 48 to 70 (RMYH…LYAY), and 85 to 105 (VFAL…LCMV).

It belongs to the anthrone oxygenase family.

The protein localises to the membrane. It carries out the reaction emodin anthrone + O2 = emodin + H2O + H(+). The protein operates within secondary metabolite biosynthesis. Functionally, anthrone oxygenase; part of the gene cluster that mediates the biosynthesis of agnestins, dihydroxy-xanthone metabolites. The pathway begins with the assembly and cyclization of atrochrysone thioester by the non-reducing polyketide synthase Agnpks1. The atrochrysone carboxyl ACP thioesterase AgnL7 then breaks the thioester bond and releases the atrochrysone carboxylic acid as the first enzyme-free intermediate. The decarboxylase AgnL1 then catalyzes the concerted decarboxylation-elimination required to convert atochrysone carboxylic acid into emodin anthrone, which is further oxidized to emodin by the anthrone oxygenase AgnL2. Emodin then undergoes reduction catalyzed by the oxidoreductase AgnL4 to yield the dihydroquinone tautomer which is the substrate for reduction by the short chain dehydrogenase AgnL6 reduction to produce hydroxyketone, followed by AgnL8 dehydration and likely spontaneous autoxidation to chrysophanol. Baeyer-Villiger oxidation by the oxidase AgnL3 leads to monodictyphenone via cleavage of the C-10/C-10a bond of chrysophanol. Alternative cleavage at the C-4a/C-10 bond of chrysophanol also leads to the formation some cephalone F. Further conversion to agnestins A and B, requires reduction to dihydro-monodictyphenone, oxidation to agnestin C probably via an epoxide, and rearrangement to either agnestin A or agnestin B directly, although agnestin A or agnestin B can also interconvert. Within the cluster, AgnR1 is the only unassigned oxidoreductase present which could be involved in this conversion. However, AgnR1 seems not to be involved in this step, and thus genes involved in the proposed oxidation/reduction may be located elsewhere on the genome. Further agnestin A derivatives are probably formed by spontaneous decarboxylations, dehydrations and methanolysis reactions. The chain is Anthrone oxygenase AgnL2 from Paecilomyces divaricatus (Penicillium divaricatum).